The following is a 187-amino-acid chain: BLOC-1-related complex subunit 8 homolog (187 aa).

The tract at residues Q165–D187 is disordered.

The protein belongs to the BORCS8 family.

The protein resides in the lysosome membrane. Functionally, may participate in the coupling of lysosomes to microtubule plus-end-directed kinesin motor. This chain is BLOC-1-related complex subunit 8 homolog, found in Nematostella vectensis (Starlet sea anemone).